A 61-amino-acid chain; its full sequence is Small ribosomal subunit protein uS14 (61 aa).

The Zn(2+) site is built by C24, C27, C40, and C43.

Belongs to the universal ribosomal protein uS14 family. Zinc-binding uS14 subfamily. As to quaternary structure, part of the 30S ribosomal subunit. Contacts proteins S3 and S10. The cofactor is Zn(2+).

In terms of biological role, binds 16S rRNA, required for the assembly of 30S particles and may also be responsible for determining the conformation of the 16S rRNA at the A site. The polypeptide is Small ribosomal subunit protein uS14 (Thermosipho africanus (strain TCF52B)).